An 86-amino-acid chain; its full sequence is Small ribosomal subunit protein bS20 (86 aa).

The tract at residues 1–27 (MANSKQAKKRAGQSEKRRQHNASRRSM) is disordered.

Belongs to the bacterial ribosomal protein bS20 family.

Functionally, binds directly to 16S ribosomal RNA. The protein is Small ribosomal subunit protein bS20 of Colwellia psychrerythraea (strain 34H / ATCC BAA-681) (Vibrio psychroerythus).